We begin with the raw amino-acid sequence, 248 residues long: 5'-nucleotidase SurE (248 aa).

Positions 8, 9, 39, and 91 each coordinate a divalent metal cation.

This sequence belongs to the SurE nucleotidase family. It depends on a divalent metal cation as a cofactor.

It localises to the cytoplasm. It carries out the reaction a ribonucleoside 5'-phosphate + H2O = a ribonucleoside + phosphate. In terms of biological role, nucleotidase that shows phosphatase activity on nucleoside 5'-monophosphates. In Neisseria gonorrhoeae (strain ATCC 700825 / FA 1090), this protein is 5'-nucleotidase SurE.